The chain runs to 339 residues: Intelectin-1 (339 aa).

The signal sequence occupies residues 1 to 18; the sequence is MLSYSLLLLALAFPAGHA. In terms of domain architecture, Fibrinogen C-terminal spans 58 to 108; that stretch reads GDMNYGYRSCNEIKSSDSRAPDGIYTLATEDGESYQTFCDMTTNGGGWTLV. Cys-67 and Cys-96 are oxidised to a cystine. Ca(2+)-binding residues include His-112, Glu-113, Asn-115, Gly-118, Gly-123, Asp-124, and Asp-159. Cystine bridges form between Cys-120–Cys-306, Cys-225–Cys-285, and Cys-277–Cys-291. An N-linked (GlcNAc...) asparagine glycan is attached at Asn-189. Asn-286, Glu-288, Glu-300, and Asp-308 together coordinate Ca(2+). Residues 288–289 and Glu-300 contribute to the a carbohydrate site; that span reads EH.

As to quaternary structure, homotrimer; disulfide-linked. Homohexamer; disulfide-linked. Forms primarily homotrimers in solution, but can also form homohexamers. N-glycosylated.

It localises to the secreted. The protein resides in the cytoplasmic vesicle. Its subcellular location is the secretory vesicle. Its function is as follows. Lectin that specifically recognizes microbial carbohydrate chains in a calcium-dependent manner. Binds to microbial glycans that contain a terminal acyclic 1,2-diol moiety, including beta-linked D-galactofuranose (beta-Galf) and D-phosphoglycerol-modified glycans. Binds to S.pneumoniae serotypes with glycans that contain beta-linked D-galactofuranose (beta-Galf) and with D-phosphoglycerol-modified glycans. Can bind a variety of monosaccharides (in vitro). Probably plays a role in the defense system against microorganisms. The chain is Intelectin-1 (itln1) from Xenopus laevis (African clawed frog).